The following is a 915-amino-acid chain: Scaffold attachment factor B1 (915 aa).

Residues 1–24 (MAETLSGLGDSGAAGAAALSSASS) are compositionally biased toward low complexity. Positions 1-33 (MAETLSGLGDSGAAGAAALSSASSETGTRRLSD) are disordered. A2 carries the post-translational modification N-acetylalanine. Phosphoserine is present on residues S24 and S55. In terms of domain architecture, SAP spans 31–65 (LSDLRVIDLRAELRKRNVDSSGNKSVLMERLKKAI). Positions 64–118 (AIEDEGGNPDEIEITSEGNKKTSKRSSKGRKPEEEGVEDNGLEENSGDGQEDVET) are disordered. The segment covering 67 to 77 (DEGGNPDEIEI) has biased composition (acidic residues). A Phosphoserine modification is found at S79. The segment covering 98–118 (EGVEDNGLEENSGDGQEDVET) has biased composition (acidic residues). Residues K172 and K186 each participate in a glycyl lysine isopeptide (Lys-Gly) (interchain with G-Cter in SUMO2) cross-link. Position 188 is a phosphothreonine (T188). Phosphoserine occurs at positions 195, 197, and 209. Residues 221-407 (LGETCKSEPV…EKGRSSCGRN (187 aa)) form a disordered region. Positions 225 to 234 (CKSEPVKEES) are enriched in basic and acidic residues. K231 is covalently cross-linked (Glycyl lysine isopeptide (Lys-Gly) (interchain with G-Cter in SUMO)). Residues 275 to 286 (SESTAHAQSSKA) show a composition bias toward polar residues. Over residues 293-309 (VKREPAEQPGDGERTDC) the composition is skewed to basic and acidic residues. Residue K294 forms a Glycyl lysine isopeptide (Lys-Gly) (interchain with G-Cter in SUMO) linkage. Positions 319-330 (EQSSAASELAEA) are enriched in low complexity. Residues 346-359 (EARDSKEDGRKFDF) are compositionally biased toward basic and acidic residues. The segment covering 371-383 (ESSTSEGADQKMS) has biased composition (polar residues). K381 is covalently cross-linked (Glycyl lysine isopeptide (Lys-Gly) (interchain with G-Cter in SUMO2)). 2 positions are modified to phosphoserine: S383 and S384. The segment covering 390–401 (DTKRLSKEEKGR) has biased composition (basic and acidic residues). Residue K392 forms a Glycyl lysine isopeptide (Lys-Gly) (interchain with G-Cter in SUMO2) linkage. Positions 406–484 (RNFWVSGLSS…KMISVEKAKN (79 aa)) constitute an RRM domain. At S415 the chain carries Phosphoserine. Basic and acidic residues-rich tracts occupy residues 477–551 (ISVE…ERSR) and 559–570 (GTERTVVMDKSK). Disordered regions lie at residues 477–641 (ISVE…EREE), 671–708 (RERM…ERRP), and 749–915 (FDHR…TRRY). Glycyl lysine isopeptide (Lys-Gly) (interchain with G-Cter in SUMO2) cross-links involve residues K483, K514, K543, and K570. The tract at residues 528–792 (GDDGSGEKSK…RHGGPERHGR (265 aa)) is interaction with POLR2A. Interaction with SFRS1; SFRS9 and SFRS10. K578 is covalently cross-linked (Glycyl lysine isopeptide (Lys-Gly) (interchain with G-Cter in SUMO1); alternate). K578 participates in a covalent cross-link: Glycyl lysine isopeptide (Lys-Gly) (interchain with G-Cter in SUMO2); alternate. A phosphoserine mark is found at S580, S582, S601, and S604. Residues 581-641 (GSKERASKSQ…RMQAQWEREE (61 aa)) show a composition bias toward basic and acidic residues. The Nuclear localization signal signature appears at 599-616 (KRSVVSFDKVKEPRKSRD). An interaction with SAFB2 region spans residues 599-915 (KRSVVSFDKV…PSDARFTRRY (317 aa)). Residue K607 is modified to N6-acetyllysine. The segment covering 749–796 (FDHRDRGRYPDHSVDRREGSRSMMGEREGQHYPERHGGPERHGRDSRD) has biased composition (basic and acidic residues). R811 is modified (omega-N-methylarginine). Basic and acidic residues-rich tracts occupy residues 817-832 (PRRD…DDRS) and 841-851 (MMDRDHKRWQG). A Glycyl lysine isopeptide (Lys-Gly) (interchain with G-Cter in SUMO2) cross-link involves residue K847. Asymmetric dimethylarginine is present on residues R868, R874, and R884. Positions 892–901 (GMQGGFGGQS) are enriched in gly residues. Positions 905 to 915 (RPSDARFTRRY) are enriched in basic and acidic residues.

Monomer and homodimer. Forms heterodimers with SAFB2. Interacts with KHDRBS3. Interacts with CLK2. Interacts with POLR2A, SRSF1/ASF, SRSF9/SRp30c and SFSF10/TRA2B. Interacts with isoform 1 and isoform 2 of SRPK1 and inhibits its activity. Interacts with RBMX. Interacts with FUS. Interacts with ZBED4. Sumoylated by PIAS1 with SUMO1 and SUMO2/3, desumoylated by SENP1. Sumoylation is required for transcriptional repressor activity. Ubiquitous. Expressed at high levels in the CNS and at low levels in the liver. Expressed in a wide number of breast cancer cell lines.

The protein localises to the nucleus. Binds to scaffold/matrix attachment region (S/MAR) DNA and forms a molecular assembly point to allow the formation of a 'transcriptosomal' complex (consisting of SR proteins and RNA polymerase II) coupling transcription and RNA processing. Functions as an estrogen receptor corepressor and can also bind to the HSP27 promoter and decrease its transcription. Thereby acts as a negative regulator of cell proliferation. When associated with RBMX, binds to and stimulates transcription from the SREBF1 promoter. This chain is Scaffold attachment factor B1 (SAFB), found in Homo sapiens (Human).